Consider the following 345-residue polypeptide: MHEAQTFSSTPATKPQYPLQRFSVAPMLDWTDRHCRYFHRLLTKQALLYTEMVTTGAIIHGKADYLAYSEQDHPVALQLGGSDPQALAHCAKLAEQRGYNEINLNVGCPSDRVQNGRFGACLMGEADLVADCIKAMRDAVAIPVTVKTRIGIDQLDSYEFLCEFVQTVAERGECEIFTIHARKAWLSGLSPKENREVPPLDYERVYQLKRDFPALTIAINGGVKTLAEAKEHLKHLDGVMMGREAYQNPGILTQVDRELFDPNAPVVDSVKAIEALYPYIEQELSQGAYLGHITRHILGIFQGIPGARQWRRHLSENAHKPGAGVSVVEEALALVSPSYYESVGG.

FMN is bound by residues 26 to 28 and Gln78; that span reads PML. Cys108 acts as the Proton donor in catalysis. Residues Lys147, His180, 220–222, and 242–243 contribute to the FMN site; these read NGG and GR.

It belongs to the Dus family. DusA subfamily. FMN is required as a cofactor.

It catalyses the reaction 5,6-dihydrouridine(20) in tRNA + NADP(+) = uridine(20) in tRNA + NADPH + H(+). The catalysed reaction is 5,6-dihydrouridine(20) in tRNA + NAD(+) = uridine(20) in tRNA + NADH + H(+). The enzyme catalyses 5,6-dihydrouridine(20a) in tRNA + NADP(+) = uridine(20a) in tRNA + NADPH + H(+). It carries out the reaction 5,6-dihydrouridine(20a) in tRNA + NAD(+) = uridine(20a) in tRNA + NADH + H(+). Functionally, catalyzes the synthesis of 5,6-dihydrouridine (D), a modified base found in the D-loop of most tRNAs, via the reduction of the C5-C6 double bond in target uridines. Specifically modifies U20 and U20a in tRNAs. The chain is tRNA-dihydrouridine(20/20a) synthase from Yersinia pestis.